Here is a 699-residue protein sequence, read N- to C-terminus: MAAPVARGECSEAALAAALADVPELARLLELDPYLKPFALDFQRRYKKFNETLNNIGENEGGIDKFSRGYESFGVHRCADGGLYCKEWAPGAEGVFLTGDFNDWNPFSYPYKKLDYGKWELYIPPKQNKSQLVPHGSKLKVVIRSKSGEILYRISPWAKYVTREGENVNYDWTHWDPEHPYKFKHSRPKKPRGVRIYESHVGISSYEGKIASYKHFTYNVLPRIKDLGYNCIQMMAIMEHAYYASFGYQITSFFAASSRYGTPEELKELVDTAHSMGITVLLDVVHSHASKNSEDGLNMFDGTDSCYFHSGPRGNHDLWDSRLFIYSSWEVLRFLLSNIRWWLEEYGFDGFRFDGVTSMLYHHHGMGQAFSGDYHEYFGLQVDEDALIYLMLANHLVHTLYPNSITIAEDVSGMPALCSPISQGGVGFDYRLAMAIPDKWIQLLKEFKDEDWNMGNIVYTLTNRRYLEKCIAYAESHDQALVGDKTLAFWLMDAEMYTNMSVLTPFTPVIDRGIQLHKMIRLITHALGGEGYLNFMGNEFGHPEWLDFPRKGNNESYHYARRQFHLTDDDLLRYKFLNNFDRDMNKLEERCGWLSAPQAFVSEKHEGNKIIAFERAGLVFIFNFHPSKSYTDYRVGTTLPGKFRIVLDTDAAEYGGHQRLDHSTEFFSQPFKHNERPCSLLVYIPNRVGLILQNVDMPN.

Substrate is bound by residues 59–60 (NE) and 88–90 (WAP). Trp104 lines the (1,4-alpha-D-glucosyl)n pocket. 115-118 (DYGK) serves as a coordination point for substrate. Lys140 provides a ligand contact to (1,4-alpha-D-glucosyl)n. Residue Tyr170 is modified to Phosphotyrosine. A substrate-binding site is contributed by 330–333 (EVLR). The active-site Nucleophile is the Asp354. Catalysis depends on Glu409, which acts as the Proton donor.

Belongs to the glycosyl hydrolase 13 family. GlgB subfamily. Monomer.

It carries out the reaction Transfers a segment of a (1-&gt;4)-alpha-D-glucan chain to a primary hydroxy group in a similar glucan chain.. It participates in glycan biosynthesis; glycogen biosynthesis. Its function is as follows. Glycogen-branching enzyme participates in the glycogen biosynthetic process along with glycogenin and glycogen synthase. Generates alpha-1,6-glucosidic branches from alpha-1,4-linked glucose chains, to increase solubility of the glycogen polymer. The polypeptide is 1,4-alpha-glucan-branching enzyme (GBE1) (Felis catus (Cat)).